Reading from the N-terminus, the 467-residue chain is ATP synthase subunit beta (467 aa).

Residue 152 to 159 participates in ATP binding; the sequence is GGAGVGKT.

It belongs to the ATPase alpha/beta chains family. As to quaternary structure, F-type ATPases have 2 components, CF(1) - the catalytic core - and CF(0) - the membrane proton channel. CF(1) has five subunits: alpha(3), beta(3), gamma(1), delta(1), epsilon(1). CF(0) has three main subunits: a(1), b(2) and c(9-12). The alpha and beta chains form an alternating ring which encloses part of the gamma chain. CF(1) is attached to CF(0) by a central stalk formed by the gamma and epsilon chains, while a peripheral stalk is formed by the delta and b chains.

It is found in the cell inner membrane. The catalysed reaction is ATP + H2O + 4 H(+)(in) = ADP + phosphate + 5 H(+)(out). Its function is as follows. Produces ATP from ADP in the presence of a proton gradient across the membrane. The catalytic sites are hosted primarily by the beta subunits. The sequence is that of ATP synthase subunit beta from Wolinella succinogenes (strain ATCC 29543 / DSM 1740 / CCUG 13145 / JCM 31913 / LMG 7466 / NCTC 11488 / FDC 602W) (Vibrio succinogenes).